Here is a 139-residue protein sequence, read N- to C-terminus: 3-hydroxyacyl-[acyl-carrier-protein] dehydratase FabZ (139 aa).

Residue His-47 is part of the active site.

It belongs to the thioester dehydratase family. FabZ subfamily.

The protein localises to the cytoplasm. It catalyses the reaction a (3R)-hydroxyacyl-[ACP] = a (2E)-enoyl-[ACP] + H2O. Involved in unsaturated fatty acids biosynthesis. Catalyzes the dehydration of short chain beta-hydroxyacyl-ACPs and long chain saturated and unsaturated beta-hydroxyacyl-ACPs. This Clostridium perfringens (strain ATCC 13124 / DSM 756 / JCM 1290 / NCIMB 6125 / NCTC 8237 / Type A) protein is 3-hydroxyacyl-[acyl-carrier-protein] dehydratase FabZ.